Consider the following 98-residue polypeptide: MNEERLTKVILAPVISEKSTLVGEKHNQVIFKILSDADKREVKQAVELLFDVKVTKVHTALVKGKRKRSGRYIGRRSNWKKAYVALQEGYEIDFASVE.

Belongs to the universal ribosomal protein uL23 family. As to quaternary structure, part of the 50S ribosomal subunit. Contacts protein L29, and trigger factor when it is bound to the ribosome.

Its function is as follows. One of the early assembly proteins it binds 23S rRNA. One of the proteins that surrounds the polypeptide exit tunnel on the outside of the ribosome. Forms the main docking site for trigger factor binding to the ribosome. This chain is Large ribosomal subunit protein uL23, found in Nitrosococcus oceani (strain ATCC 19707 / BCRC 17464 / JCM 30415 / NCIMB 11848 / C-107).